Consider the following 692-residue polypeptide: Elongation factor G (692 aa).

The 275-residue stretch at 8–282 (ENTRNIGIMA…AVLDYLPSPL (275 aa)) folds into the tr-type G domain. Residues 17 to 24 (AHIDAGKT), 81 to 85 (DTPGH), and 135 to 138 (NKMD) contribute to the GTP site.

It belongs to the TRAFAC class translation factor GTPase superfamily. Classic translation factor GTPase family. EF-G/EF-2 subfamily.

The protein resides in the cytoplasm. Catalyzes the GTP-dependent ribosomal translocation step during translation elongation. During this step, the ribosome changes from the pre-translocational (PRE) to the post-translocational (POST) state as the newly formed A-site-bound peptidyl-tRNA and P-site-bound deacylated tRNA move to the P and E sites, respectively. Catalyzes the coordinated movement of the two tRNA molecules, the mRNA and conformational changes in the ribosome. This chain is Elongation factor G (fusA), found in Halalkalibacterium halodurans (strain ATCC BAA-125 / DSM 18197 / FERM 7344 / JCM 9153 / C-125) (Bacillus halodurans).